Consider the following 155-residue polypeptide: Transcription antitermination protein NusB (155 aa).

This sequence belongs to the NusB family.

In terms of biological role, involved in transcription antitermination. Required for transcription of ribosomal RNA (rRNA) genes. Binds specifically to the boxA antiterminator sequence of the ribosomal RNA (rrn) operons. This chain is Transcription antitermination protein NusB, found in Ralstonia nicotianae (strain ATCC BAA-1114 / GMI1000) (Ralstonia solanacearum).